Here is a 321-residue protein sequence, read N- to C-terminus: Glucokinase (321 aa).

8 to 13 (GDVGGT) contributes to the ATP binding site.

The protein belongs to the bacterial glucokinase family.

Its subcellular location is the cytoplasm. The catalysed reaction is D-glucose + ATP = D-glucose 6-phosphate + ADP + H(+). The sequence is that of Glucokinase from Salmonella agona (strain SL483).